The chain runs to 165 residues: Nucleotide-binding protein Syncc9902_1708 (165 aa).

The protein belongs to the YajQ family.

Functionally, nucleotide-binding protein. This Synechococcus sp. (strain CC9902) protein is Nucleotide-binding protein Syncc9902_1708.